A 289-amino-acid chain; its full sequence is Diaminopimelate epimerase (289 aa).

The substrate site is built by N11 and N78. C87 (proton donor) is an active-site residue. Substrate-binding positions include 88-89 (GN), N163, N199, and 217-218 (ER). C226 (proton acceptor) is an active-site residue. Position 227–228 (227–228 (GT)) interacts with substrate.

Belongs to the diaminopimelate epimerase family. As to quaternary structure, homodimer.

It localises to the cytoplasm. It catalyses the reaction (2S,6S)-2,6-diaminopimelate = meso-2,6-diaminopimelate. It participates in amino-acid biosynthesis; L-lysine biosynthesis via DAP pathway; DL-2,6-diaminopimelate from LL-2,6-diaminopimelate: step 1/1. In terms of biological role, catalyzes the stereoinversion of LL-2,6-diaminopimelate (L,L-DAP) to meso-diaminopimelate (meso-DAP), a precursor of L-lysine and an essential component of the bacterial peptidoglycan. The polypeptide is Diaminopimelate epimerase (Rhodococcus opacus (strain B4)).